The chain runs to 748 residues: Catalase-peroxidase (748 aa).

A compositionally biased stretch (polar residues) spans 1 to 16; the sequence is MSSDTSASRPPQPDTR. A disordered region spans residues 1-43; that stretch reads MSSDTSASRPPQPDTRTASKSESENPAIPSPHPKSNAPLTNRD. The segment at residues 113–238 is a cross-link (tryptophyl-tyrosyl-methioninium (Trp-Tyr) (with M-264)); sequence WHAAGTYRIH…YGATTMGLIY (126 aa). The Proton acceptor role is filled by His114. Residues 238 to 264 constitute a cross-link (tryptophyl-tyrosyl-methioninium (Tyr-Met) (with W-113)); it reads YVNPEGPEGKPDPIAAAIDIRETFGRM. Heme b is bound at residue His279.

Belongs to the peroxidase family. Peroxidase/catalase subfamily. As to quaternary structure, homodimer or homotetramer. Heme b is required as a cofactor. Formation of the three residue Trp-Tyr-Met cross-link is important for the catalase, but not the peroxidase activity of the enzyme.

It catalyses the reaction H2O2 + AH2 = A + 2 H2O. The enzyme catalyses 2 H2O2 = O2 + 2 H2O. Its function is as follows. Bifunctional enzyme with both catalase and broad-spectrum peroxidase activity. This Mycolicibacterium paratuberculosis (strain ATCC BAA-968 / K-10) (Mycobacterium paratuberculosis) protein is Catalase-peroxidase.